The primary structure comprises 376 residues: Putative dihydroorotase (376 aa).

Residues His-35 and His-37 each contribute to the Zn(2+) site. Residues 37–39 (HVR) and Asn-66 contribute to the substrate site. Asp-114, His-138, and His-187 together coordinate Zn(2+). Asn-230 is a substrate binding site. Asp-257 lines the Zn(2+) pocket. Asp-257 is an active-site residue. Substrate is bound by residues His-261 and 273-274 (YG).

This sequence belongs to the metallo-dependent hydrolases superfamily. DHOase family. Class I DHOase subfamily. Zn(2+) serves as cofactor.

The catalysed reaction is (S)-dihydroorotate + H2O = N-carbamoyl-L-aspartate + H(+). Its pathway is pyrimidine metabolism; UMP biosynthesis via de novo pathway; (S)-dihydroorotate from bicarbonate: step 3/3. Its function is as follows. Catalyzes the reversible cyclization of carbamoyl aspartate to dihydroorotate. The sequence is that of Putative dihydroorotase (pyrC) from Thermotoga maritima (strain ATCC 43589 / DSM 3109 / JCM 10099 / NBRC 100826 / MSB8).